We begin with the raw amino-acid sequence, 155 residues long: Aspartate carbamoyltransferase regulatory chain (155 aa).

The Zn(2+) site is built by cysteine 110, cysteine 115, cysteine 139, and cysteine 142.

This sequence belongs to the PyrI family. Contains catalytic and regulatory chains. Requires Zn(2+) as cofactor.

Involved in allosteric regulation of aspartate carbamoyltransferase. The sequence is that of Aspartate carbamoyltransferase regulatory chain from Yersinia pestis bv. Antiqua (strain Antiqua).